The sequence spans 288 residues: 2-methoxy-6-polyprenyl-1,4-benzoquinol methylase, mitochondrial (288 aa).

The S-adenosyl-L-methionine site is built by T68, D102, and S146. Over residues P260 to P270 the composition is skewed to low complexity. Residues P260 to A288 form a disordered region. Positions C279–A288 are enriched in basic and acidic residues.

It belongs to the class I-like SAM-binding methyltransferase superfamily. MenG/UbiE family. Component of a multi-subunit COQ enzyme complex.

Its subcellular location is the mitochondrion inner membrane. It catalyses the reaction a 2-methoxy-6-(all-trans-polyprenyl)benzene-1,4-diol + S-adenosyl-L-methionine = a 5-methoxy-2-methyl-3-(all-trans-polyprenyl)benzene-1,4-diol + S-adenosyl-L-homocysteine + H(+). Its pathway is cofactor biosynthesis; ubiquinone biosynthesis. Functionally, methyltransferase required for the conversion of 2-polyprenyl-6-methoxy-1,4-benzoquinol (DDMQH2) to 2-polyprenyl-3-methyl-6-methoxy-1,4-benzoquinol (DMQH2). The polypeptide is 2-methoxy-6-polyprenyl-1,4-benzoquinol methylase, mitochondrial (Leishmania donovani).